Consider the following 370-residue polypeptide: DNA-directed RNA polymerase II subunit GRINL1A (370 aa).

Residues 1–20 are disordered; that stretch reads MSSLPRGFEPQTPEDLGQRS. Residues 15–69 adopt a coiled-coil conformation; sequence DLGQRSLAELREMLKRQERLLRNVKFICKLPDKGKKISDAVTKLKAAIAEREEVR. The segment at 29–68 is important for transcription repressor activity; it reads KRQERLLRNVKFICKLPDKGKKISDAVTKLKAAIAEREEV. Disordered regions lie at residues 93–172, 204–226, and 241–283; these read DGDR…ASEG, DPTEHHSEGNRNPENLAGLWSGP, and KNPM…RRDR. Residues 101–131 show a composition bias toward polar residues; that stretch reads NSDQILDTSSPVPGCSSVANITSSQTTSRQQ. The span at 138-152 shows a compositional bias: basic and acidic residues; it reads RGGDAEAAEAEHTVS. Positions 155 to 170 are enriched in low complexity; it reads PTSSSGAPAPSSSQAS. Over residues 205–214 the composition is skewed to basic and acidic residues; it reads PTEHHSEGNR. Residues 228-299 are interaction with Pol II; that stretch reads KKPHYMEVLE…TAARLLPLHH (72 aa). The span at 254–266 shows a compositional bias: polar residues; it reads VLPSQPRDSSSAC. Residue Ser-271 is modified to Phosphoserine. The tract at residues 300-315 is important for transcription repressor activity; sequence LPTQLLSIEESLALQR. Residues 303 to 328 adopt a coiled-coil conformation; sequence QLLSIEESLALQRQQKQSYEEIQAKL. The tract at residues 316-341 is interaction with Pol II; the sequence is QQKQSYEEIQAKLAAQKLAERLNIKM. Positions 340–370 are disordered; sequence KMQSYNPEGESSRKYREVRDEDDDQSSEDEF. The span at 349 to 358 shows a compositional bias: basic and acidic residues; the sequence is ESSRKYREVR. The segment covering 359-370 has biased composition (acidic residues); sequence DEDDDQSSEDEF.

Belongs to the GRINL1 family. Component of the Pol II(G) complex, which contains the RNA polymerase II (Pol II) core complex subunits and POLR2M and appears to be an abundant form of Pol II. Post-translationally, dephosphorylated at Ser-271 by the PNUTS-PP1 complex, promoting RNA polymerase II transcription pause-release.

Its subcellular location is the nucleus. Appears to be a stable component of the Pol II(G) complex form of RNA polymerase II (Pol II). Pol II synthesizes mRNA precursors and many functional non-coding RNAs and is the central component of the basal RNA polymerase II transcription machinery. May play a role in Mediator complex-dependent regulation of transcription activation. Acts in vitro as a negative regulator of transcriptional activation; this repression is relieved by the Mediator complex, which restores Pol II(G) activator-dependent transcription to a level equivalent to that of Pol II. The polypeptide is DNA-directed RNA polymerase II subunit GRINL1A (POLR2M) (Bos taurus (Bovine)).